The following is a 605-amino-acid chain: Alpha-1,3-galactosidase A (605 aa).

The first 20 residues, 1–20, serve as a signal peptide directing secretion; sequence MKKYLHILPACFLFYAAAHA. 6 PbH1 repeats span residues 256–278, 312–334, 421–443, 444–466, 477–507, and 517–547; these read SKNITLSRLQMHYMHGLGIVSQY, KGKVIIDSCYFAGAQDDPVNVHG, TPEVEIRNSYFTRTSTRGTLVTT, PRKVVIENNTYYKTGMSAILIEA, VKDVLIKGNTFIDCAYNGGPGHAVIAIHPSN, and HQNIRIEDNTFRTFDYPVLYAKSTAGLLFRN.

It belongs to the glycosyl hydrolase 110 family. A subfamily.

It carries out the reaction Hydrolysis of terminal, non-reducing branched (1-&gt;3)-alpha-D-galactosidic residues, producing free D-galactose.. It catalyses the reaction Hydrolysis of terminal, non-reducing alpha-D-galactose residues in alpha-D-galactosides, including galactose oligosaccharides, galactomannans and galactolipids.. In terms of biological role, alpha-galactosidase that specifically removes branched alpha-1,3-linked galactose residues present in blood group B antigens. Has no activity toward linear alpha-1,3-linked galactose residues. In Bacteroides fragilis (strain YCH46), this protein is Alpha-1,3-galactosidase A (glaA).